A 912-amino-acid chain; its full sequence is Glutamate receptor 3.2 (912 aa).

An N-terminal signal peptide occupies residues 1 to 22; that stretch reads MFWVLVLLSFIVLIGDGMISEG. At 23–587 the chain is on the extracellular side; that stretch reads AGLRPRYVDV…TPWAFLRPFT (565 aa). Residues Asn306, Asn338, Asn378, Asn417, Asn435, Asn445, and Asn532 are each glycosylated (N-linked (GlcNAc...) asparagine). Glycine-binding positions include 544–546 and Arg551; that span reads DIA. L-methionine-binding positions include 544–546 and Arg551; that span reads DIA. A helical transmembrane segment spans residues 588–608; the sequence is PPMWAVTAAFFLIVGSVIWIL. The Cytoplasmic segment spans residues 609 to 617; it reads EHRINDEFR. A helical transmembrane segment spans residues 618–638; it reads GPPRKQIVTILWFSFSTMFFS. Topologically, residues 639-649 are cytoplasmic; it reads HRENTVSTLGR. A helical transmembrane segment spans residues 650 to 670; the sequence is AVLLIWLFVVLIITSSYTASL. At 671-828 the chain is on the extracellular side; sequence TSILTVQQLN…EDSEQLKLRS (158 aa). Tyr703 is a glycine binding site. Position 703 (Tyr703) interacts with L-methionine. Asn734 is a glycosylation site (N-linked (GlcNAc...) asparagine). Residue 743–746 participates in glycine binding; that stretch reads ERPY. 743 to 746 contributes to the L-methionine binding site; it reads ERPY. A disulfide bridge links Cys755 with Cys809. Asn808 and Asn813 each carry an N-linked (GlcNAc...) asparagine glycan. A helical membrane pass occupies residues 829 to 849; it reads FWGLFLVCGISCFIALFIYFF. Residues 850 to 912 lie on the Cytoplasmic side of the membrane; the sequence is KIVRDFFRHG…DLSLKPSRPI (63 aa). The tract at residues 888 to 912 is disordered; it reads KEDESKRRMKRKRNDDLSLKPSRPI.

The protein belongs to the glutamate-gated ion channel (TC 1.A.10.1) family. In terms of assembly, forms a heteromeric channel with GLR3.4. As to expression, expressed in leaves and siliques, and at lower level in flowers and roots. Detected in the vascular tissues of both shoots and roots. Expressed in root phloem.

It localises to the cell membrane. Its function is as follows. Glutamate-gated receptor that probably acts as a non-selective cation channel. May be involved in light-signal transduction and calcium homeostasis via the regulation of calcium influx into cells. Could play a role in calcium unloading from the xylem vessels. Acts as a negative regulator of lateral root initiation and development. May restrict primordia numbers and position along the root axis by a signaling process originating in the phloem. The sequence is that of Glutamate receptor 3.2 from Arabidopsis thaliana (Mouse-ear cress).